A 376-amino-acid chain; its full sequence is MNNVTNIVRRKSTRIYIGNVPIGDGAPIAVQSMVNTRTTDILETVTQINALKKAGVDIVRISIPTMDAAEAFKIIKQQVINTPLVADIHFDYRIALKVAEYGADCLRINPGNIGNNKRIRSVVHCAQDKNISIRIGVNSGSLERDLQKKYDGNPTENVLLESAMRHVDILDKLNFHQFKVSVKSSDVLITIQAYRALASKIDQPLHIGLTEAGALRNGTVKSAMAVGFLLNEGIGDTIRISLATDPIEEVKVAFDILRALRIRAHGINFIACPGCARQEFNVINVVNALEEKVSDITTPMDVSIIGCVVNGPGEALKSTIGVAGARNKSGIYEDGIRQKKRCDNISIIEELERRIRAKSKLLDPNNHNITPTTYNK.

Residues cysteine 272, cysteine 275, cysteine 307, and glutamate 314 each contribute to the [4Fe-4S] cluster site.

It belongs to the IspG family. [4Fe-4S] cluster serves as cofactor.

It carries out the reaction (2E)-4-hydroxy-3-methylbut-2-enyl diphosphate + oxidized [flavodoxin] + H2O + 2 H(+) = 2-C-methyl-D-erythritol 2,4-cyclic diphosphate + reduced [flavodoxin]. It participates in isoprenoid biosynthesis; isopentenyl diphosphate biosynthesis via DXP pathway; isopentenyl diphosphate from 1-deoxy-D-xylulose 5-phosphate: step 5/6. Its function is as follows. Converts 2C-methyl-D-erythritol 2,4-cyclodiphosphate (ME-2,4cPP) into 1-hydroxy-2-methyl-2-(E)-butenyl 4-diphosphate. This Blochmanniella pennsylvanica (strain BPEN) protein is 4-hydroxy-3-methylbut-2-en-1-yl diphosphate synthase (flavodoxin).